The following is a 230-amino-acid chain: Large ribosomal subunit protein uL1 (230 aa).

This sequence belongs to the universal ribosomal protein uL1 family. Part of the 50S ribosomal subunit.

Functionally, binds directly to 23S rRNA. The L1 stalk is quite mobile in the ribosome, and is involved in E site tRNA release. Its function is as follows. Protein L1 is also a translational repressor protein, it controls the translation of the L11 operon by binding to its mRNA. The chain is Large ribosomal subunit protein uL1 from Sulfurimonas denitrificans (strain ATCC 33889 / DSM 1251) (Thiomicrospira denitrificans (strain ATCC 33889 / DSM 1251)).